The primary structure comprises 41 residues: Tachystatin-C (41 aa).

Cystine bridges form between Cys-12–Cys-28, Cys-19–Cys-33, and Cys-27–Cys-38.

As to expression, granular hemocytes, small secretory granules.

It localises to the secreted. Functionally, binds to chitin. Shows strong activity against E.coli (IC(50) is 1.2 ug/ml). Is also very active against S.aureus (IC(50) is 0.8 ug/ml), C.albicans (IC(50) is 0.9 ug/ml) and P.pastoris (IC(50) is 0.3 ug/ml). Binds to chitin (5.2 uM are required to obtain 50% of binding). Causes hemolysis on sheep erythrocytes, probably by forming ion-permeable pores. The chain is Tachystatin-C from Tachypleus tridentatus (Japanese horseshoe crab).